Reading from the N-terminus, the 80-residue chain is Putative antitoxin VapB44 (80 aa).

The disordered stretch occupies residues asparagine 40 to asparagine 68.

Its function is as follows. Possibly the antitoxin component of a type II toxin-antitoxin (TA) system. Its cognate toxin is VapC44 (Potential). The chain is Putative antitoxin VapB44 (vapB44) from Mycobacterium tuberculosis (strain CDC 1551 / Oshkosh).